The sequence spans 387 residues: 4-hydroxy-3-methylbut-2-en-1-yl diphosphate synthase (flavodoxin) (387 aa).

4 residues coordinate [4Fe-4S] cluster: Cys-280, Cys-283, Cys-315, and Glu-322.

The protein belongs to the IspG family. Requires [4Fe-4S] cluster as cofactor.

It carries out the reaction (2E)-4-hydroxy-3-methylbut-2-enyl diphosphate + oxidized [flavodoxin] + H2O + 2 H(+) = 2-C-methyl-D-erythritol 2,4-cyclic diphosphate + reduced [flavodoxin]. Its pathway is isoprenoid biosynthesis; isopentenyl diphosphate biosynthesis via DXP pathway; isopentenyl diphosphate from 1-deoxy-D-xylulose 5-phosphate: step 5/6. Converts 2C-methyl-D-erythritol 2,4-cyclodiphosphate (ME-2,4cPP) into 1-hydroxy-2-methyl-2-(E)-butenyl 4-diphosphate. This is 4-hydroxy-3-methylbut-2-en-1-yl diphosphate synthase (flavodoxin) from Mycobacterium bovis (strain ATCC BAA-935 / AF2122/97).